Here is a 103-residue protein sequence, read N- to C-terminus: Large ribosomal subunit protein bL21 (103 aa).

It belongs to the bacterial ribosomal protein bL21 family. As to quaternary structure, part of the 50S ribosomal subunit. Contacts protein L20.

Its function is as follows. This protein binds to 23S rRNA in the presence of protein L20. This is Large ribosomal subunit protein bL21 from Polynucleobacter necessarius subsp. necessarius (strain STIR1).